Consider the following 156-residue polypeptide: Probable cyclic pyranopterin monophosphate synthase (156 aa).

Substrate is bound by residues methionine 73–histidine 75 and methionine 109–glutamate 110. Aspartate 124 is a catalytic residue.

This sequence belongs to the MoaC family. Homohexamer; trimer of dimers.

It catalyses the reaction (8S)-3',8-cyclo-7,8-dihydroguanosine 5'-triphosphate = cyclic pyranopterin phosphate + diphosphate. It functions in the pathway cofactor biosynthesis; molybdopterin biosynthesis. In terms of biological role, catalyzes the conversion of (8S)-3',8-cyclo-7,8-dihydroguanosine 5'-triphosphate to cyclic pyranopterin monophosphate (cPMP). The chain is Probable cyclic pyranopterin monophosphate synthase from Archaeoglobus fulgidus (strain ATCC 49558 / DSM 4304 / JCM 9628 / NBRC 100126 / VC-16).